A 356-amino-acid chain; its full sequence is Peptide chain release factor 1 (356 aa).

Position 232 is an N5-methylglutamine (Gln-232). Positions 281–301 are disordered; that stretch reads ERQSSELSADRKAQVGSGDRS.

It belongs to the prokaryotic/mitochondrial release factor family. Methylated by PrmC. Methylation increases the termination efficiency of RF1.

The protein resides in the cytoplasm. Functionally, peptide chain release factor 1 directs the termination of translation in response to the peptide chain termination codons UAG and UAA. This is Peptide chain release factor 1 from Desulfovibrio desulfuricans (strain ATCC 27774 / DSM 6949 / MB).